Reading from the N-terminus, the 365-residue chain is Peptide chain release factor 2 (365 aa).

N5-methylglutamine is present on glutamine 252.

The protein belongs to the prokaryotic/mitochondrial release factor family. Methylated by PrmC. Methylation increases the termination efficiency of RF2.

The protein resides in the cytoplasm. In terms of biological role, peptide chain release factor 2 directs the termination of translation in response to the peptide chain termination codons UGA and UAA. This chain is Peptide chain release factor 2, found in Haemophilus ducreyi (strain 35000HP / ATCC 700724).